We begin with the raw amino-acid sequence, 445 residues long: Tripartite motif-containing protein 43B (445 aa).

The RING-type zinc finger occupies 16 to 57; it reads CSICQGIFMNPVYLKCGHKFCEACLLLFQEDIKFPAYCPMCM. The B box-type zinc finger occupies 88–129; sequence SEEHKCVTHKAKKMIFCDKSKILLCHLCSDSQEHSGHTHCSI. The Zn(2+) site is built by cysteine 93, histidine 96, cysteine 115, and histidine 121. Residues 271 to 445 enclose the B30.2/SPRY domain; sequence RLRAHSIPGL…VRPFFSAVYT (175 aa).

It belongs to the TRIM/RBCC family.

This Mus musculus (Mouse) protein is Tripartite motif-containing protein 43B.